The sequence spans 164 residues: Putative pre-16S rRNA nuclease (164 aa).

The protein belongs to the YqgF nuclease family.

The protein resides in the cytoplasm. In terms of biological role, could be a nuclease involved in processing of the 5'-end of pre-16S rRNA. The chain is Putative pre-16S rRNA nuclease from Synechococcus sp. (strain CC9902).